We begin with the raw amino-acid sequence, 314 residues long: tRNA N6-adenosine threonylcarbamoyltransferase (314 aa).

Residues His106, His110, and Tyr127 each coordinate Fe cation. Residues 127–131 (YVSGA), Asp159, Gly172, Glu176, and Asn255 contribute to the substrate site. Asp283 contributes to the Fe cation binding site.

This sequence belongs to the KAE1 / TsaD family. The cofactor is Fe(2+).

The protein localises to the cytoplasm. It catalyses the reaction L-threonylcarbamoyladenylate + adenosine(37) in tRNA = N(6)-L-threonylcarbamoyladenosine(37) in tRNA + AMP + H(+). Its function is as follows. Required for the formation of a threonylcarbamoyl group on adenosine at position 37 (t(6)A37) in tRNAs that read codons beginning with adenine. Is probably involved in the transfer of the threonylcarbamoyl moiety of threonylcarbamoyl-AMP (TC-AMP) to the N6 group of A37. This chain is tRNA N6-adenosine threonylcarbamoyltransferase, found in Nanoarchaeum equitans (strain Kin4-M).